The chain runs to 783 residues: E3 UFM1-protein ligase 1 homolog (783 aa).

The interval 404–482 (SNSSANFDAD…AGSSRKSVKP (79 aa)) is disordered. Basic residues predominate over residues 445 to 457 (KSTKKHQRGRAAA).

This sequence belongs to the UFL1 family.

Functionally, E3 UFM1-protein ligase that mediates ufmylation of target proteins. The chain is E3 UFM1-protein ligase 1 homolog from Drosophila mojavensis (Fruit fly).